The chain runs to 217 residues: Large ribosomal subunit protein eL6 (217 aa).

Belongs to the eukaryotic ribosomal protein eL6 family. Component of the large ribosomal subunit. May bind IPO9 with low affinity.

It localises to the cytoplasm. The protein localises to the cytosol. The protein resides in the rough endoplasmic reticulum. Its function is as follows. Component of the large ribosomal subunit. This is Large ribosomal subunit protein eL6 (rpl-6) from Caenorhabditis elegans.